The chain runs to 155 residues: uncharacterized protein (155 aa).

Residues 1–34 are disordered; that stretch reads MESLQTPQHRENQDKREKEYGVKHMPMGNNAGNL. Positions 8–22 are enriched in basic and acidic residues; sequence QHRENQDKREKEYGV. The helical transmembrane segment at 115-135 threads the bilayer; sequence MSLLLLPAFSGLTWAPFLFLF.

It localises to the membrane. This is an uncharacterized protein from Homo sapiens (Human).